The primary structure comprises 157 residues: Endoribonuclease YbeY (157 aa).

Zn(2+) is bound by residues H114, H118, and H124.

The protein belongs to the endoribonuclease YbeY family. Zn(2+) serves as cofactor.

The protein resides in the cytoplasm. Its function is as follows. Single strand-specific metallo-endoribonuclease involved in late-stage 70S ribosome quality control and in maturation of the 3' terminus of the 16S rRNA. The sequence is that of Endoribonuclease YbeY from Yersinia enterocolitica serotype O:8 / biotype 1B (strain NCTC 13174 / 8081).